Reading from the N-terminus, the 216-residue chain is Cytidylate kinase (216 aa).

Residue 10–18 coordinates ATP; that stretch reads GPAGAGKST.

The protein belongs to the cytidylate kinase family. Type 1 subfamily.

It is found in the cytoplasm. It catalyses the reaction CMP + ATP = CDP + ADP. It carries out the reaction dCMP + ATP = dCDP + ADP. The sequence is that of Cytidylate kinase from Clostridioides difficile (strain 630) (Peptoclostridium difficile).